The sequence spans 356 residues: Heparan sulfate 2-O-sulfotransferase 1 (356 aa).

At methionine 1–lysine 11 the chain is on the cytoplasmic side. The chain crosses the membrane as a helical; Signal-anchor for type II membrane protein span at residues leucine 12 to glutamate 28. Residues methionine 24–arginine 51 adopt a coiled-coil conformation. Over asparagine 29 to asparagine 356 the chain is Lumenal. Adenosine 3',5'-bisphosphate contacts are provided by lysine 83, threonine 84, alanine 85, serine 86, threonine 87, and serine 88. N-linked (GlcNAc...) asparagine glycosylation is found at asparagine 108 and asparagine 127. Catalysis depends on residues histidine 140 and histidine 142. Adenosine 3',5'-bisphosphate is bound by residues arginine 164 and serine 172. Cystine bridges form between cysteine 201-cysteine 209 and cysteine 222-cysteine 228. Residues tyrosine 279, serine 285, threonine 290, and lysine 293 each coordinate adenosine 3',5'-bisphosphate.

Belongs to the sulfotransferase 3 family. In terms of assembly, homotrimer. Interacts with the C5-epimerase GLCE. N-glycosylated.

It is found in the golgi apparatus membrane. Catalyzes the transfer of a sulfo group from 3'-phospho-5'-adenylyl sulfate (PAPS) to the 2-OH position of iduronic acid (IdoA) or glucuronic acid (GlcA) within the heparan sulfate (HS) chain and participates in HS biosynthesis. Required for metanephric development of kidney formation, suggesting that 2-O-sulfation within HS is essential for signaling between ureteric bud and metanephric mesenchyme. The sequence is that of Heparan sulfate 2-O-sulfotransferase 1 from Homo sapiens (Human).